A 264-amino-acid polypeptide reads, in one-letter code: Exosome complex component Rrp4 (264 aa).

An S1 motif domain is found at 65–137; sequence GDNVLGKIVD…EVNNIELTTK (73 aa). One can recognise a KH domain in the interval 147 to 206; sequence RGGQIIKITSSKVPRVIGKGGSMINMIKKLTQSRIIVGQNGWIWISSKNPELEKLAIEAI. The segment covering 244 to 258 has biased composition (acidic residues); the sequence is SLEEETQEETVMEND. Residues 244 to 264 are disordered; the sequence is SLEEETQEETVMENDVEARGP.

This sequence belongs to the RRP4 family. In terms of assembly, component of the archaeal exosome complex. Forms a trimer of Rrp4 and/or Csl4 subunits. The trimer associates with a hexameric ring-like arrangement composed of 3 Rrp41-Rrp42 heterodimers.

It is found in the cytoplasm. In terms of biological role, non-catalytic component of the exosome, which is a complex involved in RNA degradation. Increases the RNA binding and the efficiency of RNA degradation. Confers strong poly(A) specificity to the exosome. The polypeptide is Exosome complex component Rrp4 (Pyrococcus furiosus (strain ATCC 43587 / DSM 3638 / JCM 8422 / Vc1)).